Consider the following 147-residue polypeptide: Protein phosphatase 1 regulatory subunit 14A (147 aa).

Residues 1–11 (MAAQRLGKRVL) are compositionally biased toward basic residues. A disordered region spans residues 1-37 (MAAQRLGKRVLSKLQSPSRARGPGGSPSGLQKRHARV). Phosphoserine is present on Ser-26. Residues 35 to 120 (ARVTVKYDRR…LLAKLRGLHK (86 aa)) form an inhibitory region. Thr-38 carries the post-translational modification Phosphothreonine. The segment at 118–147 (LHKQPGFPQPSPSDDPSLSPRQDPAHTAPP) is disordered. Phosphoserine occurs at positions 128, 134, and 136.

The protein belongs to the PP1 inhibitor family.

It localises to the cytoplasm. Its function is as follows. Inhibitor of PPP1CA. Has over 1000-fold higher inhibitory activity when phosphorylated, creating a molecular switch for regulating the phosphorylation status of PPP1CA substrates and smooth muscle contraction. In Rattus norvegicus (Rat), this protein is Protein phosphatase 1 regulatory subunit 14A (Ppp1r14a).